The primary structure comprises 975 residues: P3N-PIPO polyprotein (975 aa).

Residues 139–284 enclose the Peptidase S30 domain; sequence LKGQHTIHYV…GRDMSTIREF (146 aa). Active-site for P1 proteinase activity residues include histidine 192, aspartate 201, and serine 232. An Involved in interaction with stylet and aphid transmission motif is present at residues 335–338; it reads RITC. An Involved in virions binding and aphid transmission motif is present at residues 593–595; the sequence is PTK. A Peptidase C6 domain is found at 619 to 741; the sequence is MYIAKDGFCH…ESELKYYRVG (123 aa). Catalysis depends on for helper component proteinase activity residues cysteine 627 and histidine 700.

It belongs to the potyviridae P3N-PIPO polyprotein family. As to quaternary structure, interacts (via PIPO domain) with host PCaP1 protein; this interaction may help to anchor the movement complex to the plasma membrane from which the complex could move to the plasmodesmata. Post-translationally, potyviral RNA is expressed as two polyproteins which undergo post-translational proteolytic processing. Genome polyprotein is processed by NIa-pro, P1 and HC-pro proteinases resulting in the production of at least ten individual proteins. P3N-PIPO is cleaved by P1 and HC-pro proteinases resulting in the production of three individual proteins. The P1 proteinase and the HC-pro cleave only their respective C-termini autocatalytically.

It localises to the host cell junction. Its subcellular location is the host plasmodesma. The catalysed reaction is Hydrolyzes a Gly-|-Gly bond at its own C-terminus, commonly in the sequence -Tyr-Xaa-Val-Gly-|-Gly, in the processing of the potyviral polyprotein.. Functionally, required for aphid transmission and also has proteolytic activity. Only cleaves a Gly-Gly dipeptide at its own C-terminus. Interacts with virions and aphid stylets. Acts as a suppressor of RNA-mediated gene silencing, also known as post-transcriptional gene silencing (PTGS), a mechanism of plant viral defense that limits the accumulation of viral RNAs. May have RNA-binding activity. Its function is as follows. Allows efficient cell to cell propagation, by bypassing the host cell wall barrier. Transports viral genome to neighboring plant cells directly through plasmosdesmata, without any budding. In Arachis hypogaea (Peanut), this protein is P3N-PIPO polyprotein.